A 163-amino-acid chain; its full sequence is Ribosome maturation factor RimP (163 aa).

This sequence belongs to the RimP family.

The protein resides in the cytoplasm. Its function is as follows. Required for maturation of 30S ribosomal subunits. The polypeptide is Ribosome maturation factor RimP (Streptococcus thermophilus (strain CNRZ 1066)).